The sequence spans 250 residues: 2,3-bisphosphoglycerate-dependent phosphoglycerate mutase (250 aa).

Residues 10–17 (RHGESVWN), 23–24 (TG), Arg62, 89–92 (ERHY), Lys100, 116–117 (RR), and 185–186 (GN) each bind substrate. The active-site Tele-phosphohistidine intermediate is the His11. Glu89 (proton donor/acceptor) is an active-site residue.

The protein belongs to the phosphoglycerate mutase family. BPG-dependent PGAM subfamily. As to quaternary structure, homodimer.

The catalysed reaction is (2R)-2-phosphoglycerate = (2R)-3-phosphoglycerate. The protein operates within carbohydrate degradation; glycolysis; pyruvate from D-glyceraldehyde 3-phosphate: step 3/5. Catalyzes the interconversion of 2-phosphoglycerate and 3-phosphoglycerate. This is 2,3-bisphosphoglycerate-dependent phosphoglycerate mutase from Proteus mirabilis (strain HI4320).